A 275-amino-acid chain; its full sequence is tRNA pseudouridine synthase A (275 aa).

The active-site Nucleophile is the aspartate 56. Tyrosine 110 lines the substrate pocket.

The protein belongs to the tRNA pseudouridine synthase TruA family.

The catalysed reaction is uridine(38/39/40) in tRNA = pseudouridine(38/39/40) in tRNA. Its function is as follows. Formation of pseudouridine at positions 38, 39 and 40 in the anticodon stem and loop of transfer RNAs. This chain is tRNA pseudouridine synthase A, found in Haloarcula marismortui (strain ATCC 43049 / DSM 3752 / JCM 8966 / VKM B-1809) (Halobacterium marismortui).